We begin with the raw amino-acid sequence, 198 residues long: Holliday junction branch migration complex subunit RuvA (198 aa).

Positions 1 to 63 (MYSYIIGVIT…EDASILYGFS (63 aa)) are domain I. Positions 64–142 (SQKERELFNL…KDFVPSEKPV (79 aa)) are domain II. The interval 143–153 (NKEVKRSNDSE) is flexible linker. The segment at 153 to 198 (EFAREALLQLGYFKNDVDAFIENTDISGLSIEDIMKKAMKSLDSSR) is domain III.

It belongs to the RuvA family. As to quaternary structure, homotetramer. Forms an RuvA(8)-RuvB(12)-Holliday junction (HJ) complex. HJ DNA is sandwiched between 2 RuvA tetramers; dsDNA enters through RuvA and exits via RuvB. An RuvB hexamer assembles on each DNA strand where it exits the tetramer. Each RuvB hexamer is contacted by two RuvA subunits (via domain III) on 2 adjacent RuvB subunits; this complex drives branch migration. In the full resolvosome a probable DNA-RuvA(4)-RuvB(12)-RuvC(2) complex forms which resolves the HJ.

The protein resides in the cytoplasm. Functionally, the RuvA-RuvB-RuvC complex processes Holliday junction (HJ) DNA during genetic recombination and DNA repair, while the RuvA-RuvB complex plays an important role in the rescue of blocked DNA replication forks via replication fork reversal (RFR). RuvA specifically binds to HJ cruciform DNA, conferring on it an open structure. The RuvB hexamer acts as an ATP-dependent pump, pulling dsDNA into and through the RuvAB complex. HJ branch migration allows RuvC to scan DNA until it finds its consensus sequence, where it cleaves and resolves the cruciform DNA. This Finegoldia magna (strain ATCC 29328 / DSM 20472 / WAL 2508) (Peptostreptococcus magnus) protein is Holliday junction branch migration complex subunit RuvA.